Here is a 326-residue protein sequence, read N- to C-terminus: NAD kinase (326 aa).

Catalysis depends on Asp93, which acts as the Proton acceptor. NAD(+) is bound by residues 93 to 94 (DG), Arg98, 171 to 172 (NE), Arg182, Asp201, and 212 to 217 (TAHAFS).

The protein belongs to the NAD kinase family. Requires a divalent metal cation as cofactor.

It localises to the cytoplasm. It carries out the reaction NAD(+) + ATP = ADP + NADP(+) + H(+). In terms of biological role, involved in the regulation of the intracellular balance of NAD and NADP, and is a key enzyme in the biosynthesis of NADP. Catalyzes specifically the phosphorylation on 2'-hydroxyl of the adenosine moiety of NAD to yield NADP. The protein is NAD kinase of Thermobifida fusca (strain YX).